A 180-amino-acid polypeptide reads, in one-letter code: Nucleoside-triphosphatase THEP1 (180 aa).

ATP contacts are provided by residues 9–16 (GPAGVGKT) and 104–111 (LIVIDEIG).

Belongs to the THEP1 NTPase family.

It catalyses the reaction a ribonucleoside 5'-triphosphate + H2O = a ribonucleoside 5'-diphosphate + phosphate + H(+). Functionally, has nucleotide phosphatase activity towards ATP, GTP, CTP, TTP and UTP. May hydrolyze nucleoside diphosphates with lower efficiency. The polypeptide is Nucleoside-triphosphatase THEP1 (Thermococcus kodakarensis (strain ATCC BAA-918 / JCM 12380 / KOD1) (Pyrococcus kodakaraensis (strain KOD1))).